The following is a 36-amino-acid chain: Trypsin inhibitor 2 (36 aa).

3 cysteine pairs are disulfide-bonded: cysteine 3/cysteine 20, cysteine 10/cysteine 24, and cysteine 19/cysteine 35.

Functionally, trypsin inhibitor. The polypeptide is Trypsin inhibitor 2 (Spinacia oleracea (Spinach)).